Consider the following 363-residue polypeptide: Glutamate 5-kinase (363 aa).

An ATP-binding site is contributed by K3. 3 residues coordinate substrate: S43, D128, and N140. ATP contacts are provided by residues 160-161 and 202-208; these read TD and TGGMRTK. The 83-residue stretch at 267 to 349 folds into the PUA domain; that stretch reads AGAILIDDGA…REIENVLGYS (83 aa).

It belongs to the glutamate 5-kinase family.

It is found in the cytoplasm. It carries out the reaction L-glutamate + ATP = L-glutamyl 5-phosphate + ADP. Its pathway is amino-acid biosynthesis; L-proline biosynthesis; L-glutamate 5-semialdehyde from L-glutamate: step 1/2. Catalyzes the transfer of a phosphate group to glutamate to form L-glutamate 5-phosphate. The polypeptide is Glutamate 5-kinase (Xanthomonas axonopodis pv. citri (strain 306)).